The primary structure comprises 861 residues: Xylan 1,4-beta-xylosidase (861 aa).

An N-terminal signal peptide occupies residues 1–19; the sequence is MKYQLFLSLALCVGLGASA. Aspartate 269 functions as the Nucleophile in the catalytic mechanism. In terms of domain architecture, PA14 spans 458-600; the sequence is DGKKGLKGTF…DYQETIAQLK (143 aa). Glutamate 616 serves as the catalytic Proton donor/acceptor.

This sequence belongs to the glycosyl hydrolase 3 family. As to quaternary structure, exists as a large polymeric species, presumably as a homononamer.

It carries out the reaction Hydrolysis of (1-&gt;4)-beta-D-xylans, to remove successive D-xylose residues from the non-reducing termini.. It catalyses the reaction Hydrolysis of terminal non-reducing alpha-L-arabinofuranoside residues in alpha-L-arabinosides.. The protein operates within glycan degradation; xylan degradation. Its function is as follows. Involved in degradation of plant cell wall polysaccharides. Has beta-xylosidase activity via its capacity to hydrolyze glycosidic linkages of beta-1,4-xylo-oligosaccharides of various lengths (X2 to X6), releasing xylose monomers. To a much lesser extent, also has alpha-L-arabinofuranosidase activity. Does not possess beta-D-glucosidase activity. Acts synergistically with Xyn10D-Fae1A to increase the release of xylose from xylan. This Xylanibacter ruminicola (strain ATCC 19189 / DSM 19721 / CIP 105475 / JCM 8958 / 23) (Prevotella ruminicola) protein is Xylan 1,4-beta-xylosidase.